Reading from the N-terminus, the 593-residue chain is Methionine--tRNA ligase, mitochondrial (593 aa).

The transit peptide at 1–29 (MLRTSVLRLLGRTGASRLSLLEDFGPRYY) directs the protein to the mitochondrion. A 'HIGH' region motif is present at residues 52-62 (FYVNAAPHIGH). The short motif at 347-351 (KMSKS) is the 'KMSKS' region element. Residue lysine 350 participates in ATP binding.

This sequence belongs to the class-I aminoacyl-tRNA synthetase family.

It localises to the mitochondrion matrix. It catalyses the reaction tRNA(Met) + L-methionine + ATP = L-methionyl-tRNA(Met) + AMP + diphosphate. In Homo sapiens (Human), this protein is Methionine--tRNA ligase, mitochondrial (MARS2).